Consider the following 193-residue polypeptide: Adenylate kinase (193 aa).

10 to 15 (GAGKGT) serves as a coordination point for ATP. The NMP stretch occupies residues 30 to 59 (STGDMLRAAVKAGTPIGLKAKAVMDAGGLV). Residues Thr31, Arg36, 57–59 (GLV), 85–88 (GFPR), and Gln92 contribute to the AMP site. The segment at 126 to 142 (KRAKETLAAGGTVRADD) is LID. Arg127 is an ATP binding site. AMP-binding residues include Arg139 and Arg150. Ala178 is a binding site for ATP.

It belongs to the adenylate kinase family. As to quaternary structure, monomer.

The protein localises to the cytoplasm. It carries out the reaction AMP + ATP = 2 ADP. It participates in purine metabolism; AMP biosynthesis via salvage pathway; AMP from ADP: step 1/1. Its function is as follows. Catalyzes the reversible transfer of the terminal phosphate group between ATP and AMP. Plays an important role in cellular energy homeostasis and in adenine nucleotide metabolism. The chain is Adenylate kinase from Beijerinckia indica subsp. indica (strain ATCC 9039 / DSM 1715 / NCIMB 8712).